The sequence spans 881 residues: Valine--tRNA ligase (881 aa).

The 'HIGH' region signature appears at 49–59 (PNVTGKLHLGH). Positions 526-530 (KMSKS) match the 'KMSKS' region motif. ATP is bound at residue lysine 529. Residues 810 to 881 (LADLINLDEE…VRQRLADLEK (72 aa)) adopt a coiled-coil conformation.

The protein belongs to the class-I aminoacyl-tRNA synthetase family. ValS type 1 subfamily. In terms of assembly, monomer.

Its subcellular location is the cytoplasm. The enzyme catalyses tRNA(Val) + L-valine + ATP = L-valyl-tRNA(Val) + AMP + diphosphate. Catalyzes the attachment of valine to tRNA(Val). As ValRS can inadvertently accommodate and process structurally similar amino acids such as threonine, to avoid such errors, it has a 'posttransfer' editing activity that hydrolyzes mischarged Thr-tRNA(Val) in a tRNA-dependent manner. The chain is Valine--tRNA ligase from Bacillus anthracis.